The following is a 211-amino-acid chain: DNA dC-&gt;dU-editing enzyme APOBEC-3H (211 aa).

Positions 4-126 (LTAKTFSLQF…RRQQEGLRLL (123 aa)) constitute a CMP/dCMP-type deaminase domain. H54 provides a ligand contact to Zn(2+). E56 serves as the catalytic Proton donor. 2 residues coordinate Zn(2+): C85 and C88.

This sequence belongs to the cytidine and deoxycytidylate deaminase family. In terms of assembly, homodimer. Zn(2+) serves as cofactor.

The protein localises to the cytoplasm. It carries out the reaction a 2'-deoxycytidine in single-stranded DNA + H2O + H(+) = a 2'-deoxyuridine in single-stranded DNA + NH4(+). In terms of biological role, DNA deaminase (cytidine deaminase) which may act as an inhibitor of retrovirus replication and retrotransposon mobility via deaminase-dependent and -independent mechanisms. This is DNA dC-&gt;dU-editing enzyme APOBEC-3H from Pongo pygmaeus (Bornean orangutan).